The primary structure comprises 670 residues: MTNIQTQLDNLRKTLRQYEYEYHVLDNPSVPDSEYDRLFHQLKALELEHPEFLTSDSPTQRVGAKPLSGFSQIRHEIPMLSLDNAFSDTEFNAFVKRIEDRLILLPKPLTFCCEPKLDGLAVSILYVNGVLTQAATRGDGSTGEDITANIRTIRNVPLQLLTDNPPARLEVRGEVFMPHAGFERLNKYALEHNEKTFANPRNAAAGSLRQLDPNITSKRPLVLNAYGIGIAEGVDLPTTHYDRLQWLKSIGIPVNPEIRLCNGADEVLGFYRDIQNKRSSLGYDIDGTVLKINDIALQNELGFISKAPRWAIAYKFPAQEELTLLNDVEFQVGRTGAITPVAKLEPVFVAGVTVSNATLHNGDEIERLNIAIGDTVVIRRAGDVIPQIIGVLHERRPDNAKPIIFPTNCPVCDSQIIRIEGEAVARCTGGLFCAAQRKEALKHFVSRKAMDIDGVGGKLIEQLVDRELIHTPADLFKLDLTTLTRLERMGAKSAENALNSLENAKSTTLARFIFALGIREVGEATALNLANHFKTLDALKDANLEELQQVPDVGEVVANRIFIFWREAHNVAVVEDLIAQGVHWETVEVKEASENLFKDKTVVLTGTLTQMGRNEAKALLQQLGAKVSGSVSSKTDFVIAGDAAGSKLAKAQELNITVLTEEEFLAQITR.

Residues 32–36 (DSEYD), 81–82 (SL), and Glu114 contribute to the NAD(+) site. The active-site N6-AMP-lysine intermediate is Lys116. 4 residues coordinate NAD(+): Arg137, Glu174, Lys291, and Lys315. Zn(2+) is bound by residues Cys409, Cys412, Cys427, and Cys433. Positions 592 to 670 (ASENLFKDKT…EEEFLAQITR (79 aa)) constitute a BRCT domain.

This sequence belongs to the NAD-dependent DNA ligase family. LigA subfamily. Mg(2+) serves as cofactor. Requires Mn(2+) as cofactor.

The catalysed reaction is NAD(+) + (deoxyribonucleotide)n-3'-hydroxyl + 5'-phospho-(deoxyribonucleotide)m = (deoxyribonucleotide)n+m + AMP + beta-nicotinamide D-nucleotide.. Its function is as follows. DNA ligase that catalyzes the formation of phosphodiester linkages between 5'-phosphoryl and 3'-hydroxyl groups in double-stranded DNA using NAD as a coenzyme and as the energy source for the reaction. It is essential for DNA replication and repair of damaged DNA. The protein is DNA ligase of Haemophilus influenzae (strain PittGG).